Here is a 460-residue protein sequence, read N- to C-terminus: tRNA-2-methylthio-N(6)-dimethylallyladenosine synthase (460 aa).

The region spanning 23-138 (RKVYVHTFGC…LPEMVARAER (116 aa)) is the MTTase N-terminal domain. The [4Fe-4S] cluster site is built by cysteine 32, cysteine 68, cysteine 101, cysteine 176, cysteine 180, and cysteine 183. In terms of domain architecture, Radical SAM core spans 162–394 (ARGRPTAFVT…QAAQRRIAAA (233 aa)). The 64-residue stretch at 397 to 460 (AAELGKVVEV…GGSSLSGTPA (64 aa)) folds into the TRAM domain.

Belongs to the methylthiotransferase family. MiaB subfamily. As to quaternary structure, monomer. [4Fe-4S] cluster is required as a cofactor.

The protein resides in the cytoplasm. It catalyses the reaction N(6)-dimethylallyladenosine(37) in tRNA + (sulfur carrier)-SH + AH2 + 2 S-adenosyl-L-methionine = 2-methylsulfanyl-N(6)-dimethylallyladenosine(37) in tRNA + (sulfur carrier)-H + 5'-deoxyadenosine + L-methionine + A + S-adenosyl-L-homocysteine + 2 H(+). Its function is as follows. Catalyzes the methylthiolation of N6-(dimethylallyl)adenosine (i(6)A), leading to the formation of 2-methylthio-N6-(dimethylallyl)adenosine (ms(2)i(6)A) at position 37 in tRNAs that read codons beginning with uridine. The sequence is that of tRNA-2-methylthio-N(6)-dimethylallyladenosine synthase from Anaeromyxobacter sp. (strain Fw109-5).